The sequence spans 545 residues: Chaperonin GroEL (545 aa).

Residues 29–32, Lys50, 86–90, Gly414, 477–479, and Asp493 contribute to the ATP site; these read TMGP, DGTTT, and DAA.

It belongs to the chaperonin (HSP60) family. As to quaternary structure, forms a cylinder of 14 subunits composed of two heptameric rings stacked back-to-back. Interacts with the co-chaperonin GroES.

Its subcellular location is the cytoplasm. The enzyme catalyses ATP + H2O + a folded polypeptide = ADP + phosphate + an unfolded polypeptide.. Functionally, together with its co-chaperonin GroES, plays an essential role in assisting protein folding. The GroEL-GroES system forms a nano-cage that allows encapsulation of the non-native substrate proteins and provides a physical environment optimized to promote and accelerate protein folding. The protein is Chaperonin GroEL of Campylobacter jejuni subsp. jejuni serotype O:6 (strain 81116 / NCTC 11828).